The primary structure comprises 406 residues: Eukaryotic initiation factor 4A-I (406 aa).

The disordered stretch occupies residues 1 to 21 (MSASQDSRSRDNGPDGMEPEG). Ser2 is subject to N-acetylserine. Ser4 carries the post-translational modification Phosphoserine. The Q motif motif lies at 32–60 (DSFDDMNLSESLLRGIYAYGFEKPSAIQQ). The region spanning 63–234 (ILPCIKGYDV…KKFMRDPIRI (172 aa)) is the Helicase ATP-binding domain. 76–83 (AQSGTGKT) lines the ATP pocket. Position 118 is an N6-acetyllysine (Lys118). A Glycyl lysine isopeptide (Lys-Gly) (interchain with G-Cter in SUMO2) cross-link involves residue Lys146. Thr158 is modified (phosphothreonine). Lys174 is modified (N6-acetyllysine). The DEAD box motif lies at 182–185 (DEAD). Lys193 bears the N6-acetyllysine mark. Residue Lys225 forms a Glycyl lysine isopeptide (Lys-Gly) (interchain with G-Cter in SUMO2) linkage. Lys238 bears the N6-acetyllysine; alternate mark. Lys238 participates in a covalent cross-link: Glycyl lysine isopeptide (Lys-Gly) (interchain with G-Cter in SUMO2); alternate. The Helicase C-terminal domain maps to 245 to 406 (GIRQFYINVE…EMPLNVADLI (162 aa)). Glycyl lysine isopeptide (Lys-Gly) (interchain with G-Cter in SUMO2) cross-links involve residues Lys309, Lys369, and Lys381.

This sequence belongs to the DEAD box helicase family. eIF4A subfamily. As to quaternary structure, eIF4F is a multi-subunit complex, the composition of which varies with external and internal environmental conditions. It is composed of at least EIF4A, EIF4E and EIF4G1/EIF4G3. Interacts with PAIP1, EIF4E and UPF2. Found in a complex with XPO7, EIF4A1, ARHGAP1, VPS26A, VPS29, VPS35 and SFN. May interact with NOM1. Interacts with PDCD4; this interferes with the interaction between EIF4A and EIF4G. Interacts with RBM4. Interacts with DDX3X in an RNA-independent manner. Interacts with PKP1 (via N-terminus); the interaction promotes EIF4A1 recruitment to the cap-dependent translation complex and EIF4A1 ATPase activity.

The protein localises to the cytoplasm. It is found in the perinuclear region. The protein resides in the cell membrane. Its subcellular location is the stress granule. It carries out the reaction ATP + H2O = ADP + phosphate + H(+). In terms of biological role, ATP-dependent RNA helicase which is a subunit of the eIF4F complex involved in cap recognition and is required for mRNA binding to ribosome. In the current model of translation initiation, eIF4A unwinds RNA secondary structures in the 5'-UTR of mRNAs which is necessary to allow efficient binding of the small ribosomal subunit, and subsequent scanning for the initiator codon. As a result, promotes cell proliferation and growth. This chain is Eukaryotic initiation factor 4A-I (EIF4A1), found in Macaca fascicularis (Crab-eating macaque).